The following is a 366-amino-acid chain: 5-hydroxytryptamine receptor 1F (366 aa).

The Extracellular portion of the chain corresponds to 1–24 (MDFLNSSDQNLTSEELLHRMPSKI). 2 N-linked (GlcNAc...) asparagine glycosylation sites follow: Asn5 and Asn10. A helical transmembrane segment spans residues 25–49 (LVSLTLSGLALMTTTINSLVIAAII). At 50-59 (VTRKLHHPAN) the chain is on the cytoplasmic side. Residues 60–81 (YLICSLAVTDFLVAVLVMPFSI) traverse the membrane as a helical segment. Topologically, residues 82 to 96 (VYIVRESWIMGQVLC) are extracellular. Residues Cys96 and Cys172 are joined by a disulfide bond. Residues 97 to 119 (DIWLSVDIICCTCSILHLSAIAL) form a helical membrane-spanning segment. Serotonin is bound by residues Asp103 and Cys107. Residues 120–122 (DRY) carry the DRY motif; important for ligand-induced conformation changes motif. The Cytoplasmic segment spans residues 120–139 (DRYRAITDAVEYARKRTPKQ). A helical membrane pass occupies residues 140–159 (AGIMITIVWIISVFISMPPL). Residues 160–178 (FWRHQGTSRDDECIIKHDH) lie on the Extracellular side of the membrane. A helical transmembrane segment spans residues 179–202 (IVSTIYSTFGAFYIPLVLILILYY). Over 203–291 (KIYKAAKTLY…KISGTRERKA (89 aa)) the chain is Cytoplasmic. Residues 292 to 315 (ATTLGLILGAFVICWLPFFVKELV) form a helical membrane-spanning segment. At 316–327 (VNVCEKCKISEE) the chain is on the extracellular side. The helical transmembrane segment at 328 to 350 (MANFLAWLGYLNSLINPLIYTIF) threads the bilayer. Positions 343–347 (NPLIY) match the NPxxY motif; important for ligand-induced conformation changes and signaling motif. The Cytoplasmic portion of the chain corresponds to 351–366 (NEDFKKAFQKLVRCQY).

Belongs to the G-protein coupled receptor 1 family.

Its subcellular location is the cell membrane. Its function is as follows. G-protein coupled receptor for 5-hydroxytryptamine (serotonin). Also functions as a receptor for various alkaloids and psychoactive substances. Ligand binding causes a conformation change that triggers signaling via guanine nucleotide-binding proteins (G proteins) and modulates the activity of downstream effectors, such as adenylate cyclase. HTR1F is coupled to G(i)/G(o) G alpha proteins and mediates inhibitory neurotransmission by inhibiting adenylate cyclase activity. The chain is 5-hydroxytryptamine receptor 1F (HTR1F) from Cavia porcellus (Guinea pig).